The sequence spans 177 residues: Large ribosomal subunit protein uL6 (177 aa).

This sequence belongs to the universal ribosomal protein uL6 family. In terms of assembly, part of the 50S ribosomal subunit.

Its function is as follows. This protein binds to the 23S rRNA, and is important in its secondary structure. It is located near the subunit interface in the base of the L7/L12 stalk, and near the tRNA binding site of the peptidyltransferase center. The sequence is that of Large ribosomal subunit protein uL6 from Rhizobium rhizogenes (strain K84 / ATCC BAA-868) (Agrobacterium radiobacter).